Reading from the N-terminus, the 1503-residue chain is DNA-directed RNA polymerase subunit beta' (1503 aa).

The Zn(2+) site is built by Cys-60, Cys-62, Cys-75, and Cys-78. Asp-626, Asp-628, and Asp-630 together coordinate Mg(2+). Cys-1002, Cys-1075, Cys-1082, and Cys-1085 together coordinate Zn(2+). Positions 1439 to 1503 (EESQQAEEAP…EEEDNDLPAF (65 aa)) are disordered. The span at 1486–1503 (GDNDQSDAEEEDNDLPAF) shows a compositional bias: acidic residues.

Belongs to the RNA polymerase beta' chain family. The RNAP catalytic core consists of 2 alpha, 1 beta, 1 beta' and 1 omega subunit. When a sigma factor is associated with the core the holoenzyme is formed, which can initiate transcription. It depends on Mg(2+) as a cofactor. The cofactor is Zn(2+).

It carries out the reaction RNA(n) + a ribonucleoside 5'-triphosphate = RNA(n+1) + diphosphate. Its function is as follows. DNA-dependent RNA polymerase catalyzes the transcription of DNA into RNA using the four ribonucleoside triphosphates as substrates. The sequence is that of DNA-directed RNA polymerase subunit beta' from Chloroflexus aurantiacus (strain ATCC 29364 / DSM 637 / Y-400-fl).